The chain runs to 525 residues: Heat shock factor protein 1 (525 aa).

Met-1 carries the post-translational modification N-acetylmethionine. Residues 15-120 (VPAFLTKLWT…LLENIKRKVT (106 aa)) form a DNA-binding domain region. The residue at position 80 (Lys-80) is an N6-acetyllysine. Residue Lys-91 is modified to N6-acetyllysine; alternate. Lys-91 participates in a covalent cross-link: Glycyl lysine isopeptide (Lys-Gly) (interchain with G-Cter in SUMO2); alternate. Lys-118 is modified (N6-acetyllysine). Position 121 is a phosphoserine; by MAPKAPK2 (Ser-121). Residues Lys-126 and Lys-131 each participate in a glycyl lysine isopeptide (Lys-Gly) (interchain with G-Cter in SUMO2) cross-link. The hydrophobic repeat HR-A/B stretch occupies residues 130–203 (IKIRQDSVTR…ISLVQSNRIL (74 aa)). Position 142 is a phosphothreonine; by CK2 (Thr-142). An N6-acetyllysine mark is found at Lys-150 and Lys-188. Positions 203-224 (LGVKRKIPLMLSDSNSAHSVPK) are d domain. N6-acetyllysine; alternate is present on Lys-208. Lys-208 is covalently cross-linked (Glycyl lysine isopeptide (Lys-Gly) (interchain with G-Cter in SUMO2); alternate). The residue at position 216 (Ser-216) is a Phosphoserine; by PLK1. The regulatory domain stretch occupies residues 221–310 (SVPKYGRQYS…PPSPPHSPRV (90 aa)). A Glycyl lysine isopeptide (Lys-Gly) (interchain with G-Cter in SUMO2) cross-link involves residue Lys-224. The residue at position 230 (Ser-230) is a Phosphoserine; by CAMK2A. Disordered regions lie at residues 272–327 (APTS…PLSP) and 340–365 (PTPAASNTAPMDTTGAQAPALPTPST). Residues Ser-275 and Ser-292 each carry the phosphoserine modification. At Lys-298 the chain carries N6-acetyllysine; alternate. Lys-298 is covalently cross-linked (Glycyl lysine isopeptide (Lys-Gly) (interchain with G-Cter in SUMO2); alternate). Lys-298 is covalently cross-linked (Glycyl lysine isopeptide (Lys-Gly) (interchain with G-Cter in SUMO); alternate). Residues Ser-303, Ser-307, Ser-314, and Ser-319 each carry the phosphoserine modification. Ser-320 is modified (phosphoserine; by PKA). Thr-323 bears the Phosphothreonine mark. Ser-326 is subject to Phosphoserine; by MAPK12. Residues 343–355 (AASNTAPMDTTGA) are compositionally biased toward polar residues. Ser-345 carries the post-translational modification Phosphoserine. The transactivation domain stretch occupies residues 367–525 (EKCLSVACLD…PHKAKDPTVS (159 aa)). The tract at residues 380–405 (LSDHLDAMDSNLDNLQTMLTSHGFSV) is hydrophobic repeat HR-C. The 9aaTAD motif lies at 408 to 416 (SALLDLFSP). Ser-415 is subject to Phosphoserine; by PLK1. The residue at position 440 (Ser-440) is a Phosphoserine. 2 disordered regions span residues 441–460 (PQEPPRPIEAENSNPDSGKQ) and 495–525 (YFSEGDDYTDDPTISLLTGTEPHKAKDPTVS). A compositionally biased stretch (basic and acidic residues) spans 515–525 (EPHKAKDPTVS). At Lys-520 the chain carries N6-acetyllysine.

The protein belongs to the HSF family. Monomer; cytoplasmic latent and transcriptionally inactive monomeric form in unstressed cells. Homotrimer; in response to stress, such as heat shock, homotrimerizes and translocates into the nucleus, binds to heat shock element (HSE) sequences in promoter of heat shock protein (HSP) genes and acquires transcriptional ability. Interacts (via monomeric form) with FKBP4; this interaction occurs in unstressed cells. Associates (via monomeric form) with HSP90 proteins in a multichaperone complex in unnstressed cell; this association maintains HSF1 in a non-DNA-binding and transcriptional inactive form by preventing HSF1 homotrimerization. Homotrimeric transactivation activity is modulated by protein-protein interactions and post-translational modifications. Interacts with HSP90AA1; this interaction is decreased in a IER5-dependent manner, promoting HSF1 accumulation in the nucleus, homotrimerization and DNA-binding activities. Part (via regulatory domain in the homotrimeric form) of a large heat shock-induced HSP90-dependent multichaperone complex at least composed of FKBP4, FKBP5, HSP90 proteins, PPID, PPP5C and PTGES3; this association maintains the HSF1 homotrimeric DNA-bound form in a transcriptionally inactive form. Interacts with BAG3 (via BAG domain); this interaction occurs in normal and heat-shocked cells promoting nuclear shuttling of HSF1 in a BAG3-dependent manner. Interacts (via homotrimeric and hyperphosphorylated form) with FKBP4; this interaction occurs upon heat shock in a HSP90-dependent multichaperone complex. Interacts (via homotrimeric form preferentially) with EEF1A proteins. In heat shocked cells, stress-denatured proteins compete with HSF1 homotrimeric DNA-bound form for association of the HSP90-dependent multichaperone complex, and hence alleviating repression of HSF1-mediated transcriptional activity. Interacts (via homotrimeric form preferentially) with DAXX; this interaction relieves homotrimeric HSF1 from repression of its transcriptional activity by HSP90-dependent multichaperone complex upon heat shock. Interacts (via D domain and preferentially with hyperphosphorylated form) with JNK1; this interaction occurs under both normal growth conditions and immediately upon heat shock. Interacts (via D domain and preferentially with hyperphosphorylated form) with MAPK3; this interaction occurs upon heat shock. Interacts with IER5 (via central region); this interaction promotes PPP2CA-induced dephosphorylation on Ser-121, Ser-307, Ser-314 and Thr-323 and HSF1 transactivation activity. Found in a ribonucleoprotein complex composed of the HSF1 homotrimeric form, translation elongation factor eEF1A proteins and non-coding RNA heat shock RNA-1 (HSR1); this complex occurs upon heat shock and stimulates HSF1 DNA-binding activity. Interacts (via transactivation domain) with HSPA1A/HSP70 and DNAJB1; these interactions result in the inhibition of heat shock- and HSF1-induced transcriptional activity during the attenuation and recovery phase from heat shock. Interacts (via Ser-303 and Ser-307 phosphorylated form) with YWHAE; this interaction promotes HSF1 sequestration in the cytoplasm in an ERK-dependent manner. Found in a complex with IER5 and PPP2CA. Interacts with TPR; this interaction increases upon heat shock and stimulates export of HSP70 mRNA. Interacts with SYMPK (via N-terminus) and CSTF2; these interactions occur upon heat shock. Interacts (via transactivation domain) with HSPA8. Interacts with EEF1D; this interaction occurs at heat shock promoter element (HSE) sequences. Interacts with MAPKAPK2. Interacts with PRKACA/PKA. Interacts (via transactivation domain) with GTF2A2. Interacts (via transactivation domain) with GTF2B. Interacts (via transactivation domain) with TBP. Interacts with CDK9, CCNT1 and EP300. Interacts (via N-terminus) with XRCC5 (via N-terminus) and XRCC6 (via N-terminus); these interactions are direct and prevent XRCC5/XRCC6 heterodimeric binding and non-homologous end joining (NHEJ) repair activities induced by ionizing radiation (IR). Interacts with PLK1; this interaction occurs during the early mitotic period, increases upon heat shock but does not modulate neither HSF1 homotrimerization and DNA-binding activities. Interacts (via Ser-216 phosphorylated form) with CDC20; this interaction occurs in mitosis in a MAD2L1-dependent manner and prevents PLK1-stimulated degradation of HSF1 by blocking the recruitment of the SCF(BTRC) ubiquitin ligase complex. Interacts with MAD2L1; this interaction occurs in mitosis. Interacts with BTRC; this interaction occurs during mitosis, induces its ubiquitin-dependent degradation following stimulus-dependent phosphorylation at Ser-216, a process inhibited by CDC20. Interacts with HSP90AA1 and HSP90AB1. Forms a complex with TTC5/STRAP and p300/EP300; these interactions augment chromatin-bound HSF1 and p300/EP300 histone acetyltransferase activity. In terms of processing, phosphorylated. Phosphorylated in unstressed cells; this phosphorylation is constitutive and implicated in the repression of HSF1 transcriptional activity. Phosphorylated on Ser-121 by MAPKAPK2; this phosphorylation promotes interaction with HSP90 proteins and inhibits HSF1 homotrimerization, DNA-binding and transactivation activities. Phosphorylation on Ser-303 by GSK3B/GSK3-beat and on Ser-307 by MAPK3 within the regulatory domain is involved in the repression of HSF1 transcriptional activity and occurs in a RAF1-dependent manner. Phosphorylation on Ser-303 and Ser-307 increases HSF1 nuclear export in a YWHAE- and XPO1/CRM1-dependent manner. Phosphorylation on Ser-307 is a prerequisite for phosphorylation on Ser-303. According to, Ser-303 is not phosphorylated in unstressed cells. Phosphorylated on Ser-415 by PLK1; phosphorylation promotes nuclear translocation upon heat shock. Hyperphosphorylated upon heat shock and during the attenuation and recovery phase period of the heat shock response. Phosphorylated on Thr-142; this phosphorylation increases HSF1 transactivation activity upon heat shock. Phosphorylation on Ser-230 by CAMK2A; this phosphorylation enhances HSF1 transactivation activity upon heat shock. Phosphorylation on Ser-326 by MAPK12; this phosphorylation enhances HSF1 nuclear translocation, homotrimerization and transactivation activities upon heat shock. Phosphorylated on Ser-320 by PRKACA/PKA; this phosphorylation promotes nuclear localization and transcriptional activity upon heat shock. Phosphorylated by MAPK8; this phosphorylation occurs upon heat shock, induces HSF1 translocation into nuclear stress bodies and negatively regulates transactivation activity. Neither basal nor stress-inducible phosphorylation on Ser-230, Ser-292, Ser-303, Ser-307, Ser-314, Ser-319, Ser-320, Thr-323, Ser-326, Ser-338, Ser-345, Ser-364 and Thr-365 within the regulatory domain is involved in the regulation of HSF1 subcellular localization or DNA-binding activity; however, it negatively regulates HSF1 transactivation activity. Phosphorylated on Ser-216 by PLK1 in the early mitotic period; this phosphorylation regulates HSF1 localization to the spindle pole, the recruitment of the SCF(BTRC) ubiquitin ligase complex inducing HSF1 degradation, and hence mitotic progression. Dephosphorylated on Ser-121, Ser-307, Ser-314 and Thr-323 by phosphatase PPP2CA in an IER5-dependent manner, leading to HSF1-mediated transactivation activity. Post-translationally, sumoylated with SUMO1 and SUMO2 upon heat shock in a ERK2-dependent manner. Sumoylated by SUMO1 on Lys-298; sumoylation occurs upon heat shock and promotes its localization to nuclear stress bodies and DNA-binding activity. Phosphorylation on Ser-303 and Ser-307 is probably a prerequisite for sumoylation. Acetylated on Lys-118; this acetylation is decreased in a IER5-dependent manner. Acetylated on Lys-118, Lys-208 and Lys-298; these acetylations occur in a EP300-dependent manner. Acetylated on Lys-80; this acetylation inhibits DNA-binding activity upon heat shock. Deacetylated on Lys-80 by SIRT1; this deacetylation increases DNA-binding activity. In terms of processing, ubiquitinated by SCF(BTRC) and degraded following stimulus-dependent phosphorylation at Ser-216 by PLK1 in mitosis. Polyubiquitinated. Undergoes proteasomal degradation upon heat shock and during the attenuation and recovery phase period of the heat shock response.

The protein localises to the nucleus. The protein resides in the cytoplasm. It is found in the nucleoplasm. It localises to the perinuclear region. Its subcellular location is the cytoskeleton. The protein localises to the spindle pole. The protein resides in the microtubule organizing center. It is found in the centrosome. It localises to the chromosome. Its subcellular location is the centromere. The protein localises to the kinetochore. Its function is as follows. Functions as a stress-inducible and DNA-binding transcription factor that plays a central role in the transcriptional activation of the heat shock response (HSR), leading to the expression of a large class of molecular chaperones, heat shock proteins (HSPs), that protect cells from cellular insult damage. In unstressed cells, is present in a HSP90-containing multichaperone complex that maintains it in a non-DNA-binding inactivated monomeric form. Upon exposure to heat and other stress stimuli, undergoes homotrimerization and activates HSP gene transcription through binding to site-specific heat shock elements (HSEs) present in the promoter regions of HSP genes. Upon heat shock stress, forms a chromatin-associated complex with TTC5/STRAP and p300/EP300 to stimulate HSR transcription, therefore increasing cell survival. Activation is reversible, and during the attenuation and recovery phase period of the HSR, returns to its unactivated form. Binds to inverted 5'-NGAAN-3' pentamer DNA sequences. Binds to chromatin at heat shock gene promoters. Activates transcription of transcription factor FOXR1 which in turn activates transcription of the heat shock chaperones HSPA1A and HSPA6 and the antioxidant NADPH-dependent reductase DHRS2. Binds the promoter region upstream of exon 1 of Mpv17l to activate expression of the M-LPS isoform which is involved in metabolism of reactive oxygen species. Also serves several other functions independently of its transcriptional activity. Involved in the repression of Ras-induced transcriptional activation of the c-fos gene in heat-stressed cells. Positively regulates pre-mRNA 3'-end processing and polyadenylation of HSP70 mRNA upon heat-stressed cells in a symplekin (SYMPK)-dependent manner. Plays a role in nuclear export of stress-induced HSP70 mRNA. Plays a role in the regulation of mitotic progression. Also plays a role as a negative regulator of non-homologous end joining (NHEJ) repair activity in a DNA damage-dependent manner. Involved in stress-induced cancer cell proliferation in a IER5-dependent manner. The protein is Heat shock factor protein 1 of Mus musculus (Mouse).